A 377-amino-acid polypeptide reads, in one-letter code: Phospho-N-acetylmuramoyl-pentapeptide-transferase (377 aa).

The next 10 membrane-spanning stretches (helical) occupy residues 2–22, 55–75, 82–102, 122–142, 162–182, 195–215, 236–256, 263–283, 288–308, and 343–363; these read IQLLMAAGLGLVFSIFGTPAL, VAILLSVVAAYLVTHLISVLA, ITLSGLLALGLMLGMGMVGFL, MVLQGAIGSAFAVLVLFFPDA, LAFAGPVVGLILFVVWVNLIA, LDGLATGASILVFSGYMLITL, PMDLSIVAAALVGALIGFLWW, IFMGDTGSLGLGGALAAFAVL, LLLVLIAGLFVVITMSVILQV, and FWVIAGLFVAAALGVFYGDWL.

This sequence belongs to the glycosyltransferase 4 family. MraY subfamily. The cofactor is Mg(2+).

It is found in the cell membrane. The catalysed reaction is UDP-N-acetyl-alpha-D-muramoyl-L-alanyl-gamma-D-glutamyl-meso-2,6-diaminopimeloyl-D-alanyl-D-alanine + di-trans,octa-cis-undecaprenyl phosphate = di-trans,octa-cis-undecaprenyl diphospho-N-acetyl-alpha-D-muramoyl-L-alanyl-D-glutamyl-meso-2,6-diaminopimeloyl-D-alanyl-D-alanine + UMP. It participates in cell wall biogenesis; peptidoglycan biosynthesis. Its function is as follows. Catalyzes the initial step of the lipid cycle reactions in the biosynthesis of the cell wall peptidoglycan: transfers peptidoglycan precursor phospho-MurNAc-pentapeptide from UDP-MurNAc-pentapeptide onto the lipid carrier undecaprenyl phosphate, yielding undecaprenyl-pyrophosphoryl-MurNAc-pentapeptide, known as lipid I. This Kocuria rhizophila (strain ATCC 9341 / DSM 348 / NBRC 103217 / DC2201) protein is Phospho-N-acetylmuramoyl-pentapeptide-transferase.